Consider the following 495-residue polypeptide: MRNLAVFGTASDVGKSVVATALCRIFSNAGLDVAPFKAQNMSNNSGVTPDGLEMGRAQIVQAEAARVVPTADMNPVLLKPNTDTGAQVVLQGKAVANRSARDYFGNTEVWAEAAFESLERLTGRHDLVVIEGAGSCAEMNLYDRDFVNFRTAKEADAPVILVADIDRGGVFAQVAGTLSVIPPEDRARVKGVIINRFRGDSVLFDDGIRILEELSGVPVLGVIPYFRGIHIEAEDAVPLQAVVDPAASPDPGKISIAIVYFPHISNFTDFAVFDLLDDAEVHYLHHPKDLADYDAVILPGSKNVRGDLDWMIFMGWKERLAEYRKRGGIIAGICGGYQMLGISVADPHGLEGEPGETSGLGLLPVHTLLKKEKQLFNAKGCLFDDTIPVEGYEIHMGETRLTGKASPLLQLTARNNRHSSDTDGVISHDEKVFGTYFHGIFDGSAFRGWFLGKLRPDSAVNDTITEKDTEYNRLAEHFLSHLNMGKVYEIIGRGK.

Residues Lys-253–Phe-446 enclose the GATase cobBQ-type domain. Cys-334 acts as the Nucleophile in catalysis. The active site involves His-438.

Belongs to the CobB/CobQ family. CobQ subfamily.

It functions in the pathway cofactor biosynthesis; adenosylcobalamin biosynthesis. In terms of biological role, catalyzes amidations at positions B, D, E, and G on adenosylcobyrinic A,C-diamide. NH(2) groups are provided by glutamine, and one molecule of ATP is hydrogenolyzed for each amidation. The chain is Cobyric acid synthase from Chlorobium phaeobacteroides (strain BS1).